Here is a 232-residue protein sequence, read N- to C-terminus: Phosphatidylserine decarboxylase proenzyme (232 aa).

S190 (schiff-base intermediate with substrate; via pyruvic acid) is an active-site residue. Residue S190 is modified to Pyruvic acid (Ser); by autocatalysis.

Belongs to the phosphatidylserine decarboxylase family. PSD-A subfamily. As to quaternary structure, heterodimer of a large membrane-associated beta subunit and a small pyruvoyl-containing alpha subunit. Pyruvate is required as a cofactor. Is synthesized initially as an inactive proenzyme. Formation of the active enzyme involves a self-maturation process in which the active site pyruvoyl group is generated from an internal serine residue via an autocatalytic post-translational modification. Two non-identical subunits are generated from the proenzyme in this reaction, and the pyruvate is formed at the N-terminus of the alpha chain, which is derived from the carboxyl end of the proenzyme. The post-translation cleavage follows an unusual pathway, termed non-hydrolytic serinolysis, in which the side chain hydroxyl group of the serine supplies its oxygen atom to form the C-terminus of the beta chain, while the remainder of the serine residue undergoes an oxidative deamination to produce ammonia and the pyruvoyl prosthetic group on the alpha chain.

Its subcellular location is the cell membrane. It carries out the reaction a 1,2-diacyl-sn-glycero-3-phospho-L-serine + H(+) = a 1,2-diacyl-sn-glycero-3-phosphoethanolamine + CO2. It functions in the pathway phospholipid metabolism; phosphatidylethanolamine biosynthesis; phosphatidylethanolamine from CDP-diacylglycerol: step 2/2. Functionally, catalyzes the formation of phosphatidylethanolamine (PtdEtn) from phosphatidylserine (PtdSer). In Bradyrhizobium sp. (strain BTAi1 / ATCC BAA-1182), this protein is Phosphatidylserine decarboxylase proenzyme.